The chain runs to 1029 residues: U2 snRNP-associated SURP motif-containing protein (1029 aa).

2 disordered regions span residues 1–110 (MADK…KEDE) and 141–273 (VNAA…DPST). Ala-2 is modified (N-acetylalanine). Positions 7 to 16 (GGSQKASSKN) are enriched in polar residues. Residues 45-54 (TRPKSPRKHN) are compositionally biased toward basic residues. The segment covering 55 to 64 (YRNESSRESL) has biased composition (basic and acidic residues). Ser-67 carries the phosphoserine modification. Lys-80 is covalently cross-linked (Glycyl lysine isopeptide (Lys-Gly) (interchain with G-Cter in SUMO2)). Positions 92 to 121 (AKRTLSKKEQEELKKKEDEKAAAEIYEEFL) form a coiled coil. Composition is skewed to basic and acidic residues over residues 97-110 (SKKE…KEDE) and 144-155 (AKDEHETDEKRG). Residues Lys-145 and Lys-168 each participate in a glycyl lysine isopeptide (Lys-Gly) (interchain with G-Cter in SUMO2) cross-link. Residues 169 to 178 (NPPNQSSNER) are compositionally biased toward polar residues. The segment covering 186–222 (ETKKPPLKKGEKEKKKSNLELFKEELKQIQEERDERH) has biased composition (basic and acidic residues). Residues 192–232 (LKKGEKEKKKSNLELFKEELKQIQEERDERHKTKGRLSRFE) are a coiled coil. At Ser-202 the chain carries Phosphoserine. Residue Lys-208 forms a Glycyl lysine isopeptide (Lys-Gly) (interchain with G-Cter in SUMO2) linkage. Ser-236 carries the post-translational modification Phosphoserine. Residues 239-249 (DGQRRSMDVPS) show a composition bias toward basic and acidic residues. The 82-residue stretch at 274-355 (TNLYLGNINP…FEMKLGWGKA (82 aa)) folds into the RRM domain. Residues 430–473 (LIHRMIEFVVREGPMFEAMIMNREINNPMFRFLFENQTPAHVYY) form an SURP motif repeat. At Ser-485 the chain carries Phosphoserine. Residues 534 to 679 (LKEEQRDKLE…KLQNIFLGLV (146 aa)) enclose the CID domain. Residues 704 to 729 (DGAPLEDVDGIPIDATPIDDLDGVPI) form a disordered region. Thr-719 bears the Phosphothreonine mark. Glycyl lysine isopeptide (Lys-Gly) (interchain with G-Cter in SUMO2) cross-links involve residues Lys-748 and Lys-749. Lys-760 is subject to N6-acetyllysine; alternate. A Glycyl lysine isopeptide (Lys-Gly) (interchain with G-Cter in SUMO2); alternate cross-link involves residue Lys-760. 2 disordered regions span residues 778 to 841 (KWEL…EEKR) and 855 to 1029 (QDEL…KNKH). Residues 786-806 (EESEEEENQNQEEESEDEEDT) show a composition bias toward acidic residues. A phosphoserine mark is found at Ser-788, Ser-800, and Ser-811. 2 stretches are compositionally biased toward basic and acidic residues: residues 810 to 841 (KSEE…EEKR) and 874 to 922 (QVEH…TPTR). Glycyl lysine isopeptide (Lys-Gly) (interchain with G-Cter in SUMO2) cross-links involve residues Lys-829 and Lys-832. A coiled-coil region spans residues 837 to 915 (SEEKRAKLRE…ESRSKDKKEK (79 aa)). Thr-931 is subject to Phosphothreonine. Ser-946 and Ser-948 each carry phosphoserine. Residues 950–980 (KSERSERSERSHKESSRSRSSHKDSPRDASK) show a composition bias toward basic and acidic residues. A compositionally biased stretch (basic residues) spans 991-1029 (TPKRSRRSRSRSPKKSGKKSRSQSRSPHRSHKKSKKNKH).

The protein belongs to the splicing factor SR family. In terms of assembly, interacts with ERBB4.

It is found in the nucleus. This chain is U2 snRNP-associated SURP motif-containing protein (U2surp), found in Mus musculus (Mouse).